A 433-amino-acid chain; its full sequence is UDP-N-acetylmuramoylalanine--D-glutamate ligase (433 aa).

125–131 contributes to the ATP binding site; it reads GTSGKTT.

This sequence belongs to the MurCDEF family.

It is found in the cytoplasm. It catalyses the reaction UDP-N-acetyl-alpha-D-muramoyl-L-alanine + D-glutamate + ATP = UDP-N-acetyl-alpha-D-muramoyl-L-alanyl-D-glutamate + ADP + phosphate + H(+). It participates in cell wall biogenesis; peptidoglycan biosynthesis. Cell wall formation. Catalyzes the addition of glutamate to the nucleotide precursor UDP-N-acetylmuramoyl-L-alanine (UMA). The sequence is that of UDP-N-acetylmuramoylalanine--D-glutamate ligase from Nitratidesulfovibrio vulgaris (strain ATCC 29579 / DSM 644 / CCUG 34227 / NCIMB 8303 / VKM B-1760 / Hildenborough) (Desulfovibrio vulgaris).